The chain runs to 360 residues: SUN domain-containing protein 3 (360 aa).

Residues 1 to 10 (MSGRPNSRGS) show a composition bias toward polar residues. Residues 1–39 (MSGRPNSRGSSRLFRAPSEDASSGSSGSAVLPQEENPNA) form a disordered region. Over 1–47 (MSGRPNSRGSSRLFRAPSEDASSGSSGSAVLPQEENPNASGLTRSWK) the chain is Nuclear. The helical transmembrane segment at 48–67 (AVMGMVFILTLLLLGFINHM) threads the bilayer. Topologically, residues 68-360 (KLKEKAFPQK…RVHGTPKDDS (293 aa)) are perinuclear space. Residues 103–142 (KEQLELLKKESQTLENNFREILFLIEQIDVLKALLRDMQD) adopt a coiled-coil conformation. One can recognise an SUN domain in the interval 196–357 (GASVVEAGTS…YRFRVHGTPK (162 aa)).

As to quaternary structure, self-associates. Interacts with SYNE1 and SPAG4/SUN4. Proposed to form a spermatogenesis-specific LINC complex with SYNE1 during sperm head formation possibly implicating a SUN domain-based heterotrimer with SPAG4/SUN4 associating with SYNE1.

It localises to the membrane. It is found in the nucleus envelope. The protein resides in the nucleus inner membrane. Its function is as follows. As a probable component of the LINC (LInker of Nucleoskeleton and Cytoskeleton) complex, involved in the connection between the nuclear lamina and the cytoskeleton. The nucleocytoplasmic interactions established by the LINC complex play an important role in the transmission of mechanical forces across the nuclear envelope and in nuclear movement and positioning. May be involved in nuclear remodeling during sperm head formation in spermatogenesis. A probable SUN3:SYNE1 LINC complex may tether spermatid nuclei to posterior cytoskeletal structures such as the manchette. This chain is SUN domain-containing protein 3 (SUN3), found in Bos taurus (Bovine).